The sequence spans 804 residues: MTNSNSITPVMQQYVTLKQQYKEYLLFYRLGDFYELFFDDAIKTSKILNIVLTKKGNVPMCGVPFHSSETYLNKLVKLGYKIAICEQLETSEEARKRGYKSLVKRDVVRIVTPGTIVEDSLLEAKESNYLACIVRIKDSCAIAWLELSTGLFCYHMTHISKLDSDLLRIGPKELLVADDLLEIEAVYSIIKKYRFSITQYSSSFFDENRAYNTLCNVYGVSTLKGLGDLKGVEISVCGSLLEYVIATQKGSLPKLGFPKAYVQSDFMFIDAAALRNLELFSTQSGELEGSLIASIDFTVTASGGRLLKRCLSAPLASADAINRRLSAVEFFVNNQNLYKSVRQVLRGIADIERILTRVKIARCSPKDLYSLKLTLEKTYELVELLCKFNIDIISEFCSRLGRYEDLICILNNSLLQNSVSSVKDGGFINPECDAQLSEYIYIQECSNQLIQELRDRYRNITNIQSLKILYNNILGYYVEVSSNHLIDDKNFIHRQSLANNVRYTTTELKELESKIISAKDASISLEIKIFGQLCSDVIKYADKITITAHAIAEIDMLTSFAELAVQYSYSKPIIDDSYEFNIKKGKHPVVERNGKFITNDINLSSEQRVHLITGPNMAGKSTFLRQNALIGILAHIGSFVPAEYAHIGVIDKVFSRVGASDNIVCGYSTFMVEMIETAAVINQATERSFVILDEIGRGTGTYDGLSIAWSVIEQIHNVNKSRAIFATHYHELSKLDKYLKHIKCFCMKVEEWDGKVVFLHEIIPGASDKSYGIHVAKLAGFPQSVVNRAEYLMDKLKTNEDLLT.

ATP is bound at residue 614-621; sequence GPNMAGKS.

This sequence belongs to the DNA mismatch repair MutS family.

Its function is as follows. This protein is involved in the repair of mismatches in DNA. It is possible that it carries out the mismatch recognition step. This protein has a weak ATPase activity. The protein is DNA mismatch repair protein MutS of Ehrlichia ruminantium (strain Gardel).